The following is a 229-amino-acid chain: Aquaporin Z (229 aa).

A run of 2 helical transmembrane segments spans residues 8-28 (FFGT…AAGV) and 33-53 (IGYL…AYAI). An NPA 1 motif is present at residues 62-64 (NPA). 3 helical membrane passes run 81-101 (LPYV…LYLI), 131-151 (AALV…LGAT), and 158-178 (GFAP…SIPV). The NPA 2 signature appears at 184-186 (NPA). A helical transmembrane segment spans residues 199–219 (AVSQLWLFWVAPILGAVLGAL).

This sequence belongs to the MIP/aquaporin (TC 1.A.8) family. Homotetramer.

It localises to the cell inner membrane. It carries out the reaction H2O(in) = H2O(out). Its function is as follows. Channel that permits osmotically driven movement of water in both directions. It is involved in the osmoregulation and in the maintenance of cell turgor during volume expansion in rapidly growing cells. It mediates rapid entry or exit of water in response to abrupt changes in osmolarity. This Pseudomonas aeruginosa (strain ATCC 15692 / DSM 22644 / CIP 104116 / JCM 14847 / LMG 12228 / 1C / PRS 101 / PAO1) protein is Aquaporin Z.